The chain runs to 148 residues: Prefoldin subunit 2 (148 aa).

Residues Lys87–Lys114 adopt a coiled-coil conformation. Residues Gln122–Gly134 show a composition bias toward basic and acidic residues. The disordered stretch occupies residues Gln122 to Gln148.

The protein belongs to the prefoldin subunit beta family. As to quaternary structure, heterohexamer of two PFD-alpha type and four PFD-beta type subunits forming prefoldin co-chaperone complex. Interacts with LSM8, a specific subunit of the LSM2-8 complex, which is a core component of the spliceosome.

It is found in the cytoplasm. It localises to the nucleus. Binds specifically to cytosolic chaperonin (c-CPN) and transfers target proteins to it. Binds to nascent polypeptide chain and promotes folding in an environment in which there are many competing pathways for nonnative proteins. Together with other chaperonins, contribute to the regulation of gene expression by modulating the spliceosome function on pre-mRNA splicing post-transcriptionally by acting as a co-chaperone of Hsp90 to control levels of LSM8. Required for microtubules (MTs) organization and dynamicity. Involved in the process leading to microtubules dissociation in response to gibberellic acid (GA) probably due to the DELLA proteins-mediated translocation of the prefoldin co-chaperone complex from the cytoplasm to the nucleus. The chain is Prefoldin subunit 2 from Arabidopsis thaliana (Mouse-ear cress).